The chain runs to 245 residues: Eukaryotic translation initiation factor 6 (245 aa).

2 positions are modified to phosphoserine; by CK1: S174 and S175.

It belongs to the eIF-6 family. As to quaternary structure, monomer. Associates with the 60S ribosomal subunit. In terms of processing, phosphorylation at Ser-174 and Ser-175 promotes nuclear export.

It localises to the cytoplasm. It is found in the nucleus. Its subcellular location is the nucleolus. Binds to the 60S ribosomal subunit and prevents its association with the 40S ribosomal subunit to form the 80S initiation complex in the cytoplasm. Is also involved in ribosome biogenesis. Associates with pre-60S subunits in the nucleus and is involved in its nuclear export. The polypeptide is Eukaryotic translation initiation factor 6 (Candida albicans (strain SC5314 / ATCC MYA-2876) (Yeast)).